Consider the following 213-residue polypeptide: Thymidylate kinase (213 aa).

10 to 17 (GLEGAGKT) is an ATP binding site.

The protein belongs to the thymidylate kinase family.

The enzyme catalyses dTMP + ATP = dTDP + ADP. Phosphorylation of dTMP to form dTDP in both de novo and salvage pathways of dTTP synthesis. The polypeptide is Thymidylate kinase (Salmonella dublin (strain CT_02021853)).